The chain runs to 115 residues: Non-specific lipid-transfer protein Cor a 8.0101 (115 aa).

A signal peptide spans 1–23 (MGSLKLVCAVLLCMMVAAPVARA). Disulfide bonds link cysteine 27-cysteine 74, cysteine 37-cysteine 51, cysteine 52-cysteine 97, and cysteine 72-cysteine 111.

Belongs to the plant LTP family. In terms of assembly, monomer. As to expression, expressed in seed (at protein level). Expressed in seed.

Functionally, plant non-specific lipid-transfer proteins transfer phospholipids as well as galactolipids across membranes. May play a role in wax or cutin deposition in the cell walls of expanding epidermal cells and certain secretory tissues. This is Non-specific lipid-transfer protein Cor a 8.0101 from Corylus avellana (European hazel).